The primary structure comprises 240 residues: MDLPEIQADWLTPPDLATAARVQRDLAGRVVPHGPDGPVRTVAGVDVSQFGRDPSGRVFAAVVLLDAATREVLEVGTAMRVAPIPYVPGFLGFREVPALLAAFGALSRRPDLVLVDGHGTSHPRGLGIAAHLGVLLDIPAIGVAKSILVGAPAGELGGTRGSRVPLVWQGRTIATVLRSKDRVAPLYVSTGHRIDEEAAVDWTLRLGGRYRLPEPTRRAHEAANAFRRAWGTGAAEGSGV.

Mg(2+) is bound by residues Asp46 and Asp116.

This sequence belongs to the endonuclease V family. The cofactor is Mg(2+).

The protein resides in the cytoplasm. It carries out the reaction Endonucleolytic cleavage at apurinic or apyrimidinic sites to products with a 5'-phosphate.. In terms of biological role, DNA repair enzyme involved in the repair of deaminated bases. Selectively cleaves double-stranded DNA at the second phosphodiester bond 3' to a deoxyinosine leaving behind the intact lesion on the nicked DNA. The polypeptide is Endonuclease V (Rhodospirillum centenum (strain ATCC 51521 / SW)).